The chain runs to 697 residues: Potassium-transporting ATPase ATP-binding subunit (697 aa).

The next 4 helical transmembrane spans lie at 55–75 (PIMF…FLPS), 79–99 (SIPG…VLFA), 245–265 (LTLI…YLGF), and 271–291 (VLVA…LSAI). Aspartate 324 functions as the 4-aspartylphosphate intermediate in the catalytic mechanism. ATP-binding positions include aspartate 361, glutamate 365, 393–400 (FKAETRMS), and lysine 412. 2 residues coordinate Mg(2+): aspartate 535 and aspartate 539. The next 3 membrane-spanning stretches (helical) occupy residues 605-625 (FAII…LNIM), 633-653 (AILS…PLAM), and 677-697 (GGVI…GLFI).

The protein belongs to the cation transport ATPase (P-type) (TC 3.A.3) family. Type IA subfamily. The system is composed of three essential subunits: KdpA, KdpB and KdpC.

The protein resides in the cell membrane. It carries out the reaction K(+)(out) + ATP + H2O = K(+)(in) + ADP + phosphate + H(+). Its function is as follows. Part of the high-affinity ATP-driven potassium transport (or Kdp) system, which catalyzes the hydrolysis of ATP coupled with the electrogenic transport of potassium into the cytoplasm. This subunit is responsible for energy coupling to the transport system and for the release of the potassium ions to the cytoplasm. The protein is Potassium-transporting ATPase ATP-binding subunit of Bacillus cereus (strain ZK / E33L).